Consider the following 254-residue polypeptide: Isoprenyl transferase (254 aa).

Asp24 is a catalytic residue. Mg(2+) is bound at residue Asp24. Residues 25–28 (GNGR), Trp29, Arg37, His41, and 69–71 (SSE) each bind substrate. The active-site Proton acceptor is Asn72. Residues Trp73, Arg75, Arg192, and 198 to 200 (RIS) contribute to the substrate site. Residue Glu211 participates in Mg(2+) binding.

This sequence belongs to the UPP synthase family. As to quaternary structure, homodimer. The cofactor is Mg(2+).

Catalyzes the condensation of isopentenyl diphosphate (IPP) with allylic pyrophosphates generating different type of terpenoids. The protein is Isoprenyl transferase of Bordetella parapertussis (strain 12822 / ATCC BAA-587 / NCTC 13253).